Reading from the N-terminus, the 512-residue chain is 2,3-bisphosphoglycerate-independent phosphoglycerate mutase (512 aa).

Residues Asp-14 and Ser-64 each contribute to the Mn(2+) site. The active-site Phosphoserine intermediate is the Ser-64. Substrate is bound by residues His-125, 155–156, Arg-187, Arg-193, 259–262, and Lys-332; these read RD and RADR. Mn(2+) is bound by residues Asp-399, His-403, Asp-440, His-441, and His-459.

Belongs to the BPG-independent phosphoglycerate mutase family. As to quaternary structure, monomer. The cofactor is Mn(2+).

The enzyme catalyses (2R)-2-phosphoglycerate = (2R)-3-phosphoglycerate. It functions in the pathway carbohydrate degradation; glycolysis; pyruvate from D-glyceraldehyde 3-phosphate: step 3/5. Catalyzes the interconversion of 2-phosphoglycerate and 3-phosphoglycerate. The protein is 2,3-bisphosphoglycerate-independent phosphoglycerate mutase of Ruthia magnifica subsp. Calyptogena magnifica.